We begin with the raw amino-acid sequence, 239 residues long: Tetraspanin-9 (239 aa).

The Cytoplasmic segment spans residues 1-12; that stretch reads MARGCLCCVKYM. A helical membrane pass occupies residues 13-33; sequence LFLFNLLFWLGGCGLLGVGVW. Residues 34–55 are Extracellular-facing; the sequence is LSVSQGSFATLSPSFPSISAAN. The chain crosses the membrane as a helical span at residues 56–76; that stretch reads LIITLGAVIMVTGFLGCLGAI. Over 77–85 the chain is Cytoplasmic; that stretch reads KENKCLLLS. The chain crosses the membrane as a helical span at residues 86 to 106; that stretch reads FFITLLVILLAELILLILFFV. Residues 107–203 lie on the Extracellular side of the membrane; it reads YTDNVSENAR…VEEWLDDNKH (97 aa). N-linked (GlcNAc...) asparagine glycosylation is found at N110 and N180. Residues 204–224 form a helical membrane-spanning segment; that stretch reads LLGTIAMCVLVIQLLGMAFSM. Residues 225–239 are Cytoplasmic-facing; sequence TLYQQIHRSGKKYEA.

The protein belongs to the tetraspanin (TM4SF) family.

Its subcellular location is the membrane. This Salmo salar (Atlantic salmon) protein is Tetraspanin-9 (tspan9).